A 177-amino-acid polypeptide reads, in one-letter code: Large ribosomal subunit protein uL6 (177 aa).

It belongs to the universal ribosomal protein uL6 family. In terms of assembly, part of the 50S ribosomal subunit.

Its function is as follows. This protein binds to the 23S rRNA, and is important in its secondary structure. It is located near the subunit interface in the base of the L7/L12 stalk, and near the tRNA binding site of the peptidyltransferase center. The chain is Large ribosomal subunit protein uL6 from Aliivibrio salmonicida (strain LFI1238) (Vibrio salmonicida (strain LFI1238)).